Here is a 306-residue protein sequence, read N- to C-terminus: Acetyl-coenzyme A carboxylase carboxyl transferase subunit beta (306 aa).

One can recognise a CoA carboxyltransferase N-terminal domain in the interval 27–296; sequence LWHKCPSCDA…PRFVAPVIEP (270 aa). 4 residues coordinate Zn(2+): Cys31, Cys34, Cys50, and Cys53. The C4-type zinc-finger motif lies at 31 to 53; that stretch reads CPSCDAVLYRPELEKTLDVCPKC.

This sequence belongs to the AccD/PCCB family. Acetyl-CoA carboxylase is a heterohexamer composed of biotin carboxyl carrier protein (AccB), biotin carboxylase (AccC) and two subunits each of ACCase subunit alpha (AccA) and ACCase subunit beta (AccD). The cofactor is Zn(2+).

It is found in the cytoplasm. The enzyme catalyses N(6)-carboxybiotinyl-L-lysyl-[protein] + acetyl-CoA = N(6)-biotinyl-L-lysyl-[protein] + malonyl-CoA. It functions in the pathway lipid metabolism; malonyl-CoA biosynthesis; malonyl-CoA from acetyl-CoA: step 1/1. Component of the acetyl coenzyme A carboxylase (ACC) complex. Biotin carboxylase (BC) catalyzes the carboxylation of biotin on its carrier protein (BCCP) and then the CO(2) group is transferred by the transcarboxylase to acetyl-CoA to form malonyl-CoA. The protein is Acetyl-coenzyme A carboxylase carboxyl transferase subunit beta of Pseudomonas syringae pv. tomato (strain ATCC BAA-871 / DC3000).